The primary structure comprises 284 residues: Pantothenate synthetase (284 aa).

ATP is bound at residue 30–37 (MGNLHDGH). Catalysis depends on histidine 37, which acts as the Proton donor. (R)-pantoate is bound at residue glutamine 61. Position 61 (glutamine 61) interacts with beta-alanine. 149–152 (GEKD) provides a ligand contact to ATP. A (R)-pantoate-binding site is contributed by glutamine 155. ATP contacts are provided by residues valine 178 and 186–189 (LSSR).

It belongs to the pantothenate synthetase family. As to quaternary structure, homodimer.

Its subcellular location is the cytoplasm. The enzyme catalyses (R)-pantoate + beta-alanine + ATP = (R)-pantothenate + AMP + diphosphate + H(+). The protein operates within cofactor biosynthesis; (R)-pantothenate biosynthesis; (R)-pantothenate from (R)-pantoate and beta-alanine: step 1/1. Functionally, catalyzes the condensation of pantoate with beta-alanine in an ATP-dependent reaction via a pantoyl-adenylate intermediate. The polypeptide is Pantothenate synthetase (Klebsiella pneumoniae subsp. pneumoniae (strain ATCC 700721 / MGH 78578)).